Here is a 360-residue protein sequence, read N- to C-terminus: Photosystem II protein D1 (360 aa).

The next 3 membrane-spanning stretches (helical) occupy residues 29 to 46 (YIGWFGVLMIPTLVSAIA), 118 to 133 (HFLIGVACYLGREWEL), and 142 to 156 (WICVAFSAPVAAATA). Residue histidine 118 coordinates chlorophyll a. Tyrosine 126 contributes to the pheophytin a binding site. [CaMn4O5] cluster is bound by residues aspartate 170 and glutamate 189. The helical transmembrane segment at 197–218 (FHMLGVAGVFGGSLFSAMHGSL) threads the bilayer. Histidine 198 contributes to the chlorophyll a binding site. A quinone is bound by residues histidine 215 and 264–265 (SF). Position 215 (histidine 215) interacts with Fe cation. Fe cation is bound at residue histidine 272. The helical transmembrane segment at 274–288 (FLAAWPVIGIWFTAL) threads the bilayer. 4 residues coordinate [CaMn4O5] cluster: histidine 332, glutamate 333, aspartate 342, and alanine 344. The propeptide occupies 345-360 (AGDVAPVALTAPPING).

This sequence belongs to the reaction center PufL/M/PsbA/D family. PSII is composed of 1 copy each of membrane proteins PsbA, PsbB, PsbC, PsbD, PsbE, PsbF, PsbH, PsbI, PsbJ, PsbK, PsbL, PsbM, PsbT, PsbX, PsbY, PsbZ, Psb30/Ycf12, peripheral proteins PsbO, CyanoQ (PsbQ), PsbU, PsbV and a large number of cofactors. It forms dimeric complexes. The D1/D2 heterodimer binds P680, chlorophylls that are the primary electron donor of PSII, and subsequent electron acceptors. It shares a non-heme iron and each subunit binds pheophytin, quinone, additional chlorophylls, carotenoids and lipids. D1 provides most of the ligands for the Mn4-Ca-O5 cluster of the oxygen-evolving complex (OEC). There is also a Cl(-1) ion associated with D1 and D2, which is required for oxygen evolution. The PSII complex binds additional chlorophylls, carotenoids and specific lipids. is required as a cofactor. Post-translationally, tyr-161 forms a radical intermediate that is referred to as redox-active TyrZ, YZ or Y-Z. C-terminally processed by CtpA; processing is essential to allow assembly of the oxygen-evolving complex and thus photosynthetic growth.

It localises to the cellular thylakoid membrane. It catalyses the reaction 2 a plastoquinone + 4 hnu + 2 H2O = 2 a plastoquinol + O2. In terms of biological role, photosystem II (PSII) is a light-driven water:plastoquinone oxidoreductase that uses light energy to abstract electrons from H(2)O, generating O(2) and a proton gradient subsequently used for ATP formation. It consists of a core antenna complex that captures photons, and an electron transfer chain that converts photonic excitation into a charge separation. The D1/D2 (PsbA/PsbD) reaction center heterodimer binds P680, the primary electron donor of PSII as well as several subsequent electron acceptors. The protein is Photosystem II protein D1 of Trichormus azollae (Anabaena azollae).